Consider the following 91-residue polypeptide: Small nuclear ribonucleoprotein F (91 aa).

One can recognise a Sm domain in the interval 8–81; that stretch reads APKPFLYDLK…VLFVRGIDDE (74 aa).

The protein belongs to the snRNP Sm proteins family. SmF/LSm6 subfamily. In terms of assembly, core component of the spliceosomal U1, U2, U4 and U5 small nuclear ribonucleoproteins (snRNPs), the building blocks of the spliceosome. Most spliceosomal snRNPs contain a common set of Sm proteins, SNRPB, SNRPD1, SNRPD2, SNRPD3, SNRPE, SNRPF and SNRPG that assemble in a heptameric protein ring on the Sm site of the small nuclear RNA to form the core snRNP. Component of the U1 snRNP. Component of the U4/U6-U5 tri-snRNP complex. Component of the U7 snRNP complex. Component of the U11/U12 snRNPs that are part of the U12-type spliceosome. Part of the SMN-Sm complex that catalyzes core snRNPs assembly.

It localises to the cytoplasm. The protein localises to the cytosol. Its subcellular location is the nucleus. Plays a role in pre-mRNA splicing as a core component of the spliceosomal U1, U2, U4 and U5 small nuclear ribonucleoproteins (snRNPs), the building blocks of the spliceosome. Component of both the pre-catalytic spliceosome B complex and activated spliceosome C complexes. Is also a component of the minor U12 spliceosome. The protein is Small nuclear ribonucleoprotein F (snrpf) of Dictyostelium discoideum (Social amoeba).